A 106-amino-acid polypeptide reads, in one-letter code: Iron-sulfur cluster assembly protein CyaY (106 aa).

Belongs to the frataxin family.

In terms of biological role, involved in iron-sulfur (Fe-S) cluster assembly. May act as a regulator of Fe-S biogenesis. The sequence is that of Iron-sulfur cluster assembly protein CyaY from Salmonella typhimurium (strain LT2 / SGSC1412 / ATCC 700720).